Consider the following 415-residue polypeptide: Multidrug resistance protein MdtA (415 aa).

A signal peptide spans 1–21; the sequence is MKGSYKSRWVIVIVVVIAAIA. Disordered regions lie at residues 32–59 and 392–415; these read SRSA…SGPL and EAQS…GARS. Residues 399-415 are compositionally biased toward basic and acidic residues; the sequence is SEEKATSREYAKKGARS.

The protein belongs to the membrane fusion protein (MFP) (TC 8.A.1) family. Part of a tripartite efflux system composed of MdtA, MdtB and MdtC.

Its subcellular location is the cell inner membrane. Functionally, the MdtABC tripartite complex confers resistance against novobiocin and deoxycholate. The polypeptide is Multidrug resistance protein MdtA (Escherichia coli O17:K52:H18 (strain UMN026 / ExPEC)).